Reading from the N-terminus, the 61-residue chain is Small ribosomal subunit protein uS14 (61 aa).

C24, C27, C40, and C43 together coordinate Zn(2+).

Belongs to the universal ribosomal protein uS14 family. Zinc-binding uS14 subfamily. Part of the 30S ribosomal subunit. Contacts proteins S3 and S10. Requires Zn(2+) as cofactor.

In terms of biological role, binds 16S rRNA, required for the assembly of 30S particles and may also be responsible for determining the conformation of the 16S rRNA at the A site. In Borreliella afzelii (strain PKo) (Borrelia afzelii), this protein is Small ribosomal subunit protein uS14.